We begin with the raw amino-acid sequence, 193 residues long: Phosphoheptose isomerase (193 aa).

The SIS domain occupies 37-193; it reads LADSFKVGGK…QLIEKEMVKA (157 aa). Residue 52-54 participates in substrate binding; sequence NGG. Residues histidine 61 and glutamate 65 each contribute to the Zn(2+) site. Substrate is bound by residues glutamate 65, 93-94, 119-121, serine 124, and glutamine 172; these read ND and STS. The Zn(2+) site is built by glutamine 172 and histidine 180.

The protein belongs to the SIS family. GmhA subfamily. In terms of assembly, homotetramer. Requires Zn(2+) as cofactor.

It is found in the cytoplasm. The enzyme catalyses 2 D-sedoheptulose 7-phosphate = D-glycero-alpha-D-manno-heptose 7-phosphate + D-glycero-beta-D-manno-heptose 7-phosphate. It participates in carbohydrate biosynthesis; D-glycero-D-manno-heptose 7-phosphate biosynthesis; D-glycero-alpha-D-manno-heptose 7-phosphate and D-glycero-beta-D-manno-heptose 7-phosphate from sedoheptulose 7-phosphate: step 1/1. Its pathway is bacterial outer membrane biogenesis; LPS core biosynthesis. Functionally, catalyzes the isomerization of sedoheptulose 7-phosphate in D-glycero-D-manno-heptose 7-phosphate. This is Phosphoheptose isomerase from Photorhabdus laumondii subsp. laumondii (strain DSM 15139 / CIP 105565 / TT01) (Photorhabdus luminescens subsp. laumondii).